Consider the following 434-residue polypeptide: Trigger factor (434 aa).

One can recognise a PPIase FKBP-type domain in the interval 161 to 246 (EDRVTVDFSG…LKKVEERELP (86 aa)).

It belongs to the FKBP-type PPIase family. Tig subfamily.

The protein localises to the cytoplasm. The catalysed reaction is [protein]-peptidylproline (omega=180) = [protein]-peptidylproline (omega=0). Involved in protein export. Acts as a chaperone by maintaining the newly synthesized protein in an open conformation. Functions as a peptidyl-prolyl cis-trans isomerase. This is Trigger factor from Serratia proteamaculans (strain 568).